The chain runs to 296 residues: Zinc finger CCCH-type antiviral protein 1-like (296 aa).

Ala-2 is modified (N-acetylalanine). C3H1-type zinc fingers lie at residues 111-136 and 198-219; these read LCRRHMLGKCPHRDCWSTCSLSHDIH and VCKSFVRGECPFQPCKRSHQLI.

The polypeptide is Zinc finger CCCH-type antiviral protein 1-like (Zc3hav1l) (Mus musculus (Mouse)).